The primary structure comprises 544 residues: POTE ankyrin domain family member B2 (544 aa).

ANK repeat units lie at residues 135–167 (QKRT…VLDN), 168–200 (KKRT…IQDE), 201–233 (YGNT…SKNK), 234–266 (CGLT…ALDR), and 267–299 (YGRT…SQDL). The tract at residues 332–457 (SSENSNPEQD…NTGISQDEIL (126 aa)) is disordered. Composition is skewed to basic and acidic residues over residues 340 to 355 (QDLK…RLKV) and 364 to 375 (MSQEPEINKDCD). Over residues 439–457 (TQKQLSEEQNTGISQDEIL) the composition is skewed to polar residues.

The protein belongs to the POTE family.

This chain is POTE ankyrin domain family member B2 (POTEB2), found in Homo sapiens (Human).